We begin with the raw amino-acid sequence, 188 residues long: Mediator of RNA polymerase II transcription subunit 29 (188 aa).

The segment covering 1–11 (MAMLLNQSQPP) has biased composition (polar residues). Residues 1–27 (MAMLLNQSQPPQGREGGGTQVGSLGPG) form a disordered region.

This sequence belongs to the Mediator complex subunit 29 family. Component of the Mediator complex.

It is found in the nucleus. Component of the Mediator complex, a coactivator involved in the regulated transcription of nearly all RNA polymerase II-dependent genes. Mediator functions as a bridge to convey information from gene-specific regulatory proteins to the basal RNA polymerase II transcription machinery. Mediator is recruited to promoters by direct interactions with regulatory proteins and serves as a scaffold for the assembly of a functional preinitiation complex with RNA polymerase II and the general transcription factors. The chain is Mediator of RNA polymerase II transcription subunit 29 (med29) from Xenopus tropicalis (Western clawed frog).